The chain runs to 348 residues: Holliday junction branch migration complex subunit RuvB (348 aa).

The segment at 1-183 (MTEASRIVAP…FGIPVRLNFY (183 aa)) is large ATPase domain (RuvB-L). ATP contacts are provided by residues Leu-22, Arg-23, Gly-64, Lys-67, Thr-68, Thr-69, 130 to 132 (EDF), Arg-173, Tyr-183, and Arg-220. A Mg(2+)-binding site is contributed by Thr-68. The interval 184-254 (TEDELEKIVS…VADHALGALE (71 aa)) is small ATPAse domain (RuvB-S). Residues 257 to 348 (AAGLDAMDRR…SGLFGQDEDR (92 aa)) are head domain (RuvB-H). 3 residues coordinate DNA: Arg-293, Arg-312, and Arg-317. Residues 329–348 (LTEPSRDPAQSGLFGQDEDR) form a disordered region.

Belongs to the RuvB family. Homohexamer. Forms an RuvA(8)-RuvB(12)-Holliday junction (HJ) complex. HJ DNA is sandwiched between 2 RuvA tetramers; dsDNA enters through RuvA and exits via RuvB. An RuvB hexamer assembles on each DNA strand where it exits the tetramer. Each RuvB hexamer is contacted by two RuvA subunits (via domain III) on 2 adjacent RuvB subunits; this complex drives branch migration. In the full resolvosome a probable DNA-RuvA(4)-RuvB(12)-RuvC(2) complex forms which resolves the HJ.

It localises to the cytoplasm. It carries out the reaction ATP + H2O = ADP + phosphate + H(+). In terms of biological role, the RuvA-RuvB-RuvC complex processes Holliday junction (HJ) DNA during genetic recombination and DNA repair, while the RuvA-RuvB complex plays an important role in the rescue of blocked DNA replication forks via replication fork reversal (RFR). RuvA specifically binds to HJ cruciform DNA, conferring on it an open structure. The RuvB hexamer acts as an ATP-dependent pump, pulling dsDNA into and through the RuvAB complex. RuvB forms 2 homohexamers on either side of HJ DNA bound by 1 or 2 RuvA tetramers; 4 subunits per hexamer contact DNA at a time. Coordinated motions by a converter formed by DNA-disengaged RuvB subunits stimulates ATP hydrolysis and nucleotide exchange. Immobilization of the converter enables RuvB to convert the ATP-contained energy into a lever motion, pulling 2 nucleotides of DNA out of the RuvA tetramer per ATP hydrolyzed, thus driving DNA branch migration. The RuvB motors rotate together with the DNA substrate, which together with the progressing nucleotide cycle form the mechanistic basis for DNA recombination by continuous HJ branch migration. Branch migration allows RuvC to scan DNA until it finds its consensus sequence, where it cleaves and resolves cruciform DNA. This is Holliday junction branch migration complex subunit RuvB from Nitrobacter winogradskyi (strain ATCC 25391 / DSM 10237 / CIP 104748 / NCIMB 11846 / Nb-255).